Reading from the N-terminus, the 513-residue chain is Cytochrome P450 4d10 (513 aa).

Glutamate 317 and cysteine 457 together coordinate heme.

It belongs to the cytochrome P450 family. The cofactor is heme.

The protein localises to the endoplasmic reticulum membrane. It is found in the microsome membrane. May play an important role in the maintenance of specific insect-host plant relationships. May be involved in xenobiotic metabolism. This is Cytochrome P450 4d10 (Cyp4d10) from Drosophila mettleri (Fruit fly).